The primary structure comprises 636 residues: MSFELELKRIRDEIVQNLPPEITVTKIEFEGPEIAVYSESEDVAAIETSSTLKDLAKVMRKRVVFRWNVDKRKDPAETKDYIMNLISKDAEIGEITFDHTRGEVIIESGKPGLVIGKKGINLKEIRTNTFWQPKTIRTPPLPSRTIQLIRGMLKKERQTQKDILLEIGKRIHRPALFNNLNIRMNALGGFREVGRSCILMQTRDSNVLLDVGLNVGNPNDRFPYFFVPQFSIRDLDAVIISHSHLDHCGVVPFLYKYGYRGPIYCTLPTRNLSTMLQLDFIQICDKEGTPSPYSKRDVKNAVLHTIPLSWGKVTDIAPDIKLTLHNSGHILGSSMIHLHFGKGDYNFVYTGDFKYQKTRLLEKATVKFPRVEGLLIEATYGGPQDRIPSRQESEKELKQILNSTLKRGGKVLIPVLAVGRAQELLIVLEEYISSGFIDKVPVYIDGLISEATAIHTANPDFLSSDLREKILHQGKNPFLSDFFETVSSQDERADIIGGGPCIILATSGMLIGGPSVHYLKALAEDSKNTLIFVSYQVSGTLGSRIIRGFREFNYIDWKGRTQLVKIGLKVFTLEGFSGHSSRSQISQFLRRIQPRPKVVIVNHGEESKCVSLSTMIHKKLRKSTKSPKNLEVVLLK.

The KHa stretch occupies residues Glu4–Arg72. The tract at residues Lys73–Pro140 is KHb. The segment at Asn181–Pro383 is metallo-beta-lactamase N-terminus. Positions 242, 244, 246, 247, 329, and 352 each coordinate Zn(2+). Positions Gln384–Ser577 are beta-Casp. A metallo-beta-lactamase C-terminus region spans residues Gly578–Lys636. His603 lines the Zn(2+) pocket.

This sequence belongs to the metallo-beta-lactamase superfamily. RNA-metabolizing metallo-beta-lactamase-like family. FttA subfamily. In terms of assembly, homodimer. Interacts with RNA polymerase (RNAP), interacts with the Spt4-Spt5 complex. It depends on Zn(2+) as a cofactor.

Terminates transcription on the whole genome. Termination is linked to FttA-mediated RNA cleavage and does not require NTP hydrolysis. Cleaves endonucleolytically at the RNA exit channel of RNA polymerase (RNAP); the 5'-3' exonuclease activity of this protein degrades the nascent RNA released from RNAP. Functionally, terminates transcription genome-wide in M.maripaludis. Restores wild-type growth to a strain of Methanococcus maripaludis depleted for this gene at 22 degrees Celsius and prevents transcriptional read-through. Transcription termination is most effective in vivo on RNAs with more than one U4-tract in their 3'-ends. Has endonuclease activity after U-rich tracts in transcription termination sequences. This Lokiarchaeum sp. (strain GC14_75) protein is Transcription termination factor FttA.